The primary structure comprises 33 residues: Cytochrome b6-f complex subunit 8 (33 aa).

The chain crosses the membrane as a helical span at residues 2 to 22 (LFTVAWASLAAMFSFSIAMVV).

It belongs to the PetN family. In terms of assembly, the 4 large subunits of the cytochrome b6-f complex are cytochrome b6, subunit IV (17 kDa polypeptide, PetD), cytochrome f and the Rieske protein, while the 4 small subunits are PetG, PetL, PetM and PetN. The complex functions as a dimer.

It localises to the cellular thylakoid membrane. Its function is as follows. Component of the cytochrome b6-f complex, which mediates electron transfer between photosystem II (PSII) and photosystem I (PSI), cyclic electron flow around PSI, and state transitions. This is Cytochrome b6-f complex subunit 8 from Synechococcus sp. (strain CC9902).